The primary structure comprises 373 residues: Securin (373 aa).

Residues 1–10 (MMPANEDKEN) show a composition bias toward basic and acidic residues. The tract at residues 1–27 (MMPANEDKENNIVYTGNESSGINFPQT) is disordered. Positions 12–26 (IVYTGNESSGINFPQ) are enriched in polar residues. The short motif at 85–88 (RLPL) is the D-box element. The interval 177–278 (ADSGKNEESS…LPYVPEGYSP (102 aa)) is disordered. Phosphoserine is present on residues Ser-185, Ser-186, Ser-212, and Ser-213. The segment covering 185–194 (SSDDDEGNED) has biased composition (acidic residues). The span at 225-235 (LFNEQGGLQQL) shows a compositional bias: low complexity. Residues 240–256 (TKNEQKTKNDKSDKTDD) show a composition bias toward basic and acidic residues. Ser-277 is subject to Phosphoserine. A Phosphoserine; by CDC28 modification is found at Ser-292.

Belongs to the securin family. As to quaternary structure, interacts with the caspase-like ESP1, and prevents its protease activity probably by covering its active site. Interacts with CDC20. In terms of processing, phosphorylated by CDC28. The phosphorylation may be important for ESP1 localization to the nucleus. Ubiquitinated by the anaphase promoting complex (APC) at the onset of anaphase, conducting to its degradation.

The protein resides in the cytoplasm. It localises to the nucleus. Functionally, regulatory protein, which plays a central role in chromosome stability. Probably acts by blocking the action of key proteins. During the mitosis, it blocks Separase/ESP1 function, preventing the proteolysis of the cohesin complex and the subsequent segregation of the chromosomes. At the onset of anaphase, it is ubiquitinated, conducting to its destruction and to the liberation of ESP1. The protein is Securin (PDS1) of Saccharomyces cerevisiae (strain ATCC 204508 / S288c) (Baker's yeast).